The chain runs to 495 residues: Maintenance of mitochondrial morphology protein 1 (495 aa).

At 1 to 22 (MALQQHEPAPFAPQSSLSFTQG) the chain is on the lumenal side. The chain crosses the membrane as a helical span at residues 23–43 (FLLGQLSVVLLIGAFIKFFIF). Over 44–495 (GEAPPPPSRG…PVGTPGIPDN (452 aa)) the chain is Cytoplasmic. Disordered stretches follow at residues 63–94 (YSSV…PSTS), 269–320 (ASTE…SPKS), 382–428 (WPRM…EPEG), and 440–495 (GLGA…IPDN). Polar residues-rich tracts occupy residues 65 to 74 (SVYSPPQDSQ) and 82 to 94 (STSN…PSTS). Positions 128 to 379 (QPESLDWFNV…EPRVQVVGLP (252 aa)) constitute an SMP-LTD domain. Pro residues predominate over residues 271–289 (TEPPEPLQTPAGSPAPPTS). Residues 418–428 (FSDDHGREPEG) are compositionally biased toward basic and acidic residues. Over residues 458–469 (RSSSMTRQQSGG) the composition is skewed to polar residues.

It belongs to the MMM1 family. In terms of assembly, homodimer. Component of the ER-mitochondria encounter structure (ERMES) or MDM complex, composed of mmm1, mdm10, mdm12 and mdm34. An MMM1 homodimer associates with one molecule of mdm12 on each side in a pairwise head-to-tail manner, and the SMP-LTD domains of mmm1 and mdm12 generate a continuous hydrophobic tunnel for phospholipid trafficking.

Its subcellular location is the endoplasmic reticulum membrane. Component of the ERMES/MDM complex, which serves as a molecular tether to connect the endoplasmic reticulum (ER) and mitochondria. Components of this complex are involved in the control of mitochondrial shape and protein biogenesis, and function in nonvesicular lipid trafficking between the ER and mitochondria. The mdm12-mmm1 subcomplex functions in the major beta-barrel assembly pathway that is responsible for biogenesis of all outer membrane beta-barrel proteins, and acts in a late step after the SAM complex. The mdm10-mdm12-mmm1 subcomplex further acts in the TOM40-specific pathway after the action of the mdm12-mmm1 complex. Essential for establishing and maintaining the structure of mitochondria and maintenance of mtDNA nucleoids. The protein is Maintenance of mitochondrial morphology protein 1 of Penicillium rubens (strain ATCC 28089 / DSM 1075 / NRRL 1951 / Wisconsin 54-1255) (Penicillium chrysogenum).